The chain runs to 237 residues: Ribosomal RNA small subunit methyltransferase G (237 aa).

S-adenosyl-L-methionine-binding positions include Gly78, Phe83, 129 to 130, and Arg148; that span reads AE.

This sequence belongs to the methyltransferase superfamily. RNA methyltransferase RsmG family.

The protein localises to the cytoplasm. Functionally, specifically methylates the N7 position of a guanine in 16S rRNA. The sequence is that of Ribosomal RNA small subunit methyltransferase G from Clostridium kluyveri (strain ATCC 8527 / DSM 555 / NBRC 12016 / NCIMB 10680 / K1).